The chain runs to 369 residues: Probable trehalose-phosphate phosphatase I (369 aa).

It belongs to the trehalose phosphatase family. A divalent metal cation is required as a cofactor.

It carries out the reaction alpha,alpha-trehalose 6-phosphate + H2O = alpha,alpha-trehalose + phosphate. It participates in glycan biosynthesis; trehalose biosynthesis. In terms of biological role, removes the phosphate from trehalose 6-phosphate to produce free trehalose. Trehalose accumulation in plant may improve abiotic stress tolerance. This chain is Probable trehalose-phosphate phosphatase I (TPPI), found in Arabidopsis thaliana (Mouse-ear cress).